The chain runs to 1402 residues: DNA-directed RNA polymerase subunit beta' (1402 aa).

Zn(2+)-binding residues include Cys-71, Cys-73, Cys-86, and Cys-89. Mg(2+)-binding residues include Asp-462, Asp-464, and Asp-466. Zn(2+) contacts are provided by Cys-811, Cys-885, Cys-892, and Cys-895.

This sequence belongs to the RNA polymerase beta' chain family. As to quaternary structure, the RNAP catalytic core consists of 2 alpha, 1 beta, 1 beta' and 1 omega subunit. When a sigma factor is associated with the core the holoenzyme is formed, which can initiate transcription. Requires Mg(2+) as cofactor. The cofactor is Zn(2+).

It carries out the reaction RNA(n) + a ribonucleoside 5'-triphosphate = RNA(n+1) + diphosphate. In terms of biological role, DNA-dependent RNA polymerase catalyzes the transcription of DNA into RNA using the four ribonucleoside triphosphates as substrates. This is DNA-directed RNA polymerase subunit beta' from Bartonella henselae (strain ATCC 49882 / DSM 28221 / CCUG 30454 / Houston 1) (Rochalimaea henselae).